The chain runs to 564 residues: Type 2 DNA topoisomerase 6 subunit B (564 aa).

ATP contacts are provided by residues asparagine 46, aspartate 78, 99 to 100 (TK), 109 to 116 (GQQGIGIS), and lysine 471.

Belongs to the TOP6B family. Homodimer. Heterotetramer of two Top6A and two Top6B chains.

The catalysed reaction is ATP-dependent breakage, passage and rejoining of double-stranded DNA.. Relaxes both positive and negative superturns and exhibits a strong decatenase activity. The chain is Type 2 DNA topoisomerase 6 subunit B from Pyrococcus horikoshii (strain ATCC 700860 / DSM 12428 / JCM 9974 / NBRC 100139 / OT-3).